The sequence spans 255 residues: Sugar fermentation stimulation protein homolog (255 aa).

Belongs to the SfsA family.

This is Sugar fermentation stimulation protein homolog from Synechococcus sp. (strain WH7803).